A 591-amino-acid chain; its full sequence is Cineole synthase 1, chloroplastic (591 aa).

The transit peptide at 1-44 (MSSLIMQVVIPKPAKFFHNNLFSLSSKRHRFSTTTTTRGGRWAR) directs the protein to the chloroplast. Positions 308, 345, 349, 486, and 489 each coordinate (2E)-geranyl diphosphate. Residues D345 and D349 each coordinate Mg(2+). The DDXXD motif motif lies at 345–349 (DDVFD). Mg(2+) contacts are provided by D489, T493, and E497.

It belongs to the terpene synthase family. Tpsb subfamily. Monomer. The cofactor is Mg(2+). Mn(2+) is required as a cofactor.

Its subcellular location is the plastid. It is found in the chloroplast. It catalyses the reaction (2E)-geranyl diphosphate + H2O = 1,8-cineole + diphosphate. The enzyme catalyses (2E)-geranyl diphosphate = alpha-pinene + diphosphate. The catalysed reaction is (2E)-geranyl diphosphate = beta-pinene + diphosphate. It carries out the reaction (2E)-geranyl diphosphate + H2O = (S)-alpha-terpineol + diphosphate. It catalyses the reaction (2E)-geranyl diphosphate = beta-myrcene + diphosphate. The enzyme catalyses (2E)-geranyl diphosphate = sabinene + diphosphate. The protein operates within secondary metabolite biosynthesis; terpenoid biosynthesis. In terms of biological role, monoterpene synthase (TPS) involved in the biosynthesis of monoterpene natural products, components of the chemical defense arsenal. Catalyzes the conversion of (2E)-geranyl diphosphate (GPP) into 1,8-cineole, and, as minor products, alpha-terpineol, beta-pinene, alpha-pinene, sabinene and myrcene. The polypeptide is Cineole synthase 1, chloroplastic (Salvia fruticosa (Greek sage)).